A 1702-amino-acid chain; its full sequence is Dicer-like protein 4 (1702 aa).

2 disordered regions span residues 1-52 (MRDE…SAAT) and 89-120 (SSSS…EKDP). A compositionally biased stretch (basic and acidic residues) spans 17–31 (GKRDREQKNCEEEKN). Residues 89–105 (SSSSVSSFSSSSSSLFS) show a composition bias toward low complexity. In terms of domain architecture, Helicase ATP-binding spans 131 to 307 (LCKKATEENV…SENLSKSINS (177 aa)). ATP is bound at residue 144–151 (LGTGCGKT). Residues 251–254 (DECH) carry the DECH box motif. The region spanning 475 to 629 (QLIKILSVFR…RMNLEITYRS (155 aa)) is the Helicase C-terminal domain. Residues 656-748 (SISLLYKYCS…LPDSKDEIED (93 aa)) form the Dicer dsRNA-binding fold domain. The PAZ domain maps to 932-1054 (LVEDIFPPSG…IPPELSHLKI (123 aa)). 2 consecutive RNase III domains span residues 1083-1251 (ELKH…VDSG) and 1292-1436 (LETL…LDCG). Positions 1330, 1422, and 1425 each coordinate Mg(2+). DRBM domains follow at residues 1462 to 1528 (SPIK…NLKA) and 1621 to 1697 (TAKS…CLKH).

Belongs to the helicase family. Dicer subfamily. In terms of assembly, interacts with DRB4. Requires Mg(2+) as cofactor. Mn(2+) is required as a cofactor.

The protein localises to the nucleus. Its function is as follows. Ribonuclease (RNase) III involved in RNA-mediated post-transcriptional gene silencing (PTGS). Functions in the biogenesis of trans-acting small interfering RNAs (ta-siRNAs, derived from the TAS1, TAS2 or TAS3 endogenous transcripts) by cleaving small dsRNAs into 21-24 nucleotide ta-siRNAs. Functions with the dsRNA-binding protein DRB4 in ta-siRNAs processing. Acts in the RDR6/SGS3/DCL4/AGO7 ta-siRNA pathway involved in leaf developmental timing. Plays a role in transitive silencing of transgenes by processing secondary siRNAs. This pathway, which requires DCL2 and RDR6, amplifies silencing by using the target RNA as substrate to generate secondary siRNAs, providing an efficient mechanism for long-distance silencing. Required for the production of the 30-40 nucleotide bacterial-induced long siRNAs (lsiRNA). May participate with DCL3 in the production of 24 nucleotide repeat-associated siRNAs (ra-siRNAs) which derive from heterochromatin and DNA repeats such as transposons. Plays an important role in antiviral RNA silencing. Involved in the production of viral siRNAs derived from the cucumber mosaic virus (CMV), turnip crinkle virus (TCV) and tobacco rattle virus (TRV). Targeted by the viral silencing suppressor (VSR) protein 2b of the cucumber mosaic virus (CMV) that inactivates DCL4 function in RNA silencing. Does not seem to be involved in microRNAs (miRNAs) processing. This is Dicer-like protein 4 (DCL4) from Arabidopsis thaliana (Mouse-ear cress).